The primary structure comprises 429 residues: Glucan 1,3-beta-glucosidase (429 aa).

A signal peptide spans 1-19; the sequence is MLSMQVVSLISLLVSVCLA. Residues 20–27 constitute a propeptide that is removed on maturation; that stretch reads QPLPLSKR. The active-site Proton donor is Glu-215. Intrachain disulfides connect Cys-299/Cys-425 and Cys-324/Cys-354. Glu-316 acts as the Nucleophile in catalysis.

This sequence belongs to the glycosyl hydrolase 5 (cellulase A) family.

It localises to the secreted. The enzyme catalyses Successive hydrolysis of beta-D-glucose units from the non-reducing ends of (1-&gt;3)-beta-D-glucans, releasing alpha-glucose.. Beta-glucanases participate in the metabolism of beta-glucan, the main structural component of the cell wall. It could also function biosynthetically as a transglycosylase. This Kluyveromyces lactis (strain ATCC 8585 / CBS 2359 / DSM 70799 / NBRC 1267 / NRRL Y-1140 / WM37) (Yeast) protein is Glucan 1,3-beta-glucosidase.